We begin with the raw amino-acid sequence, 497 residues long: Glycerol kinase (497 aa).

Residue threonine 12 participates in ADP binding. Residues threonine 12, threonine 13, and serine 14 each contribute to the ATP site. Threonine 12 lines the sn-glycerol 3-phosphate pocket. ADP is bound at residue arginine 16. Positions 82, 83, 134, and 243 each coordinate sn-glycerol 3-phosphate. Residues arginine 82, glutamate 83, tyrosine 134, aspartate 243, and glutamine 244 each contribute to the glycerol site. ADP-binding residues include threonine 265 and glycine 308. Residues threonine 265, glycine 308, glutamine 312, and glycine 409 each contribute to the ATP site. Positions 409 and 413 each coordinate ADP.

This sequence belongs to the FGGY kinase family.

It carries out the reaction glycerol + ATP = sn-glycerol 3-phosphate + ADP + H(+). Its pathway is polyol metabolism; glycerol degradation via glycerol kinase pathway; sn-glycerol 3-phosphate from glycerol: step 1/1. Inhibited by fructose 1,6-bisphosphate (FBP). Its function is as follows. Key enzyme in the regulation of glycerol uptake and metabolism. Catalyzes the phosphorylation of glycerol to yield sn-glycerol 3-phosphate. The sequence is that of Glycerol kinase from Solidesulfovibrio magneticus (strain ATCC 700980 / DSM 13731 / RS-1) (Desulfovibrio magneticus).